The primary structure comprises 336 residues: Dihydroorotate dehydrogenase (quinone) (336 aa).

Residues 62–66 and Thr-86 contribute to the FMN site; that span reads AGLDK. Lys-66 serves as a coordination point for substrate. 111–115 provides a ligand contact to substrate; the sequence is NRMGF. FMN-binding residues include Asn-139 and Asn-172. A substrate-binding site is contributed by Asn-172. Ser-175 functions as the Nucleophile in the catalytic mechanism. Asn-177 provides a ligand contact to substrate. FMN contacts are provided by Lys-217 and Thr-245. 246–247 provides a ligand contact to substrate; that stretch reads NT. FMN-binding positions include Gly-268, Gly-297, and 318–319; that span reads YS.

This sequence belongs to the dihydroorotate dehydrogenase family. Type 2 subfamily. As to quaternary structure, monomer. Requires FMN as cofactor.

The protein resides in the cell membrane. The catalysed reaction is (S)-dihydroorotate + a quinone = orotate + a quinol. It participates in pyrimidine metabolism; UMP biosynthesis via de novo pathway; orotate from (S)-dihydroorotate (quinone route): step 1/1. Functionally, catalyzes the conversion of dihydroorotate to orotate with quinone as electron acceptor. The sequence is that of Dihydroorotate dehydrogenase (quinone) from Aeromonas hydrophila subsp. hydrophila (strain ATCC 7966 / DSM 30187 / BCRC 13018 / CCUG 14551 / JCM 1027 / KCTC 2358 / NCIMB 9240 / NCTC 8049).